The chain runs to 298 residues: 2-dehydro-3-deoxy-D-arabinonate dehydratase (298 aa).

Ile86 is a substrate binding site. Mg(2+) contacts are provided by Glu148, Glu150, and Asp169. Lys187 and Thr261 together coordinate substrate.

It belongs to the FAH family. Homotetramer. The cofactor is Mg(2+). It depends on Ca(2+) as a cofactor.

The enzyme catalyses 2-dehydro-3-deoxy-D-arabinonate = 2,5-dioxopentanoate + H2O. In terms of biological role, participates in a pentose oxidation pathway that converts D-arabinonate to 2-oxoglutarate. This chain is 2-dehydro-3-deoxy-D-arabinonate dehydratase, found in Saccharolobus solfataricus (strain ATCC 35092 / DSM 1617 / JCM 11322 / P2) (Sulfolobus solfataricus).